The following is a 296-amino-acid chain: Iron-sulfur cluster carrier protein (296 aa).

The span at 1-17 shows a compositional bias: low complexity; it reads MSSNPFRIQNPQPQPQR. A disordered region spans residues 1-23; sequence MSSNPFRIQNPQPQPQRQPRDLR. 52–59 serves as a coordination point for ATP; the sequence is GKGGVGKS.

Belongs to the Mrp/NBP35 ATP-binding proteins family. As to quaternary structure, homodimer.

Functionally, binds and transfers iron-sulfur (Fe-S) clusters to target apoproteins. Can hydrolyze ATP. The chain is Iron-sulfur cluster carrier protein from Saccharolobus solfataricus (strain ATCC 35092 / DSM 1617 / JCM 11322 / P2) (Sulfolobus solfataricus).